Consider the following 484-residue polypeptide: tRNA sulfurtransferase (484 aa).

Positions 63–167 (QAFGERLACI…RDNLYMVTKR (105 aa)) constitute a THUMP domain. ATP-binding positions include 185–186 (LI), Lys-267, Gly-289, and Gln-298. A disulfide bridge connects residues Cys-346 and Cys-458. A Rhodanese domain is found at 406–484 (IDTNQVVIDI…GYTNVKVYRP (79 aa)). The active-site Cysteine persulfide intermediate is the Cys-458.

It belongs to the ThiI family.

Its subcellular location is the cytoplasm. It carries out the reaction [ThiI sulfur-carrier protein]-S-sulfanyl-L-cysteine + a uridine in tRNA + 2 reduced [2Fe-2S]-[ferredoxin] + ATP + H(+) = [ThiI sulfur-carrier protein]-L-cysteine + a 4-thiouridine in tRNA + 2 oxidized [2Fe-2S]-[ferredoxin] + AMP + diphosphate. The catalysed reaction is [ThiS sulfur-carrier protein]-C-terminal Gly-Gly-AMP + S-sulfanyl-L-cysteinyl-[cysteine desulfurase] + AH2 = [ThiS sulfur-carrier protein]-C-terminal-Gly-aminoethanethioate + L-cysteinyl-[cysteine desulfurase] + A + AMP + 2 H(+). The protein operates within cofactor biosynthesis; thiamine diphosphate biosynthesis. Catalyzes the ATP-dependent transfer of a sulfur to tRNA to produce 4-thiouridine in position 8 of tRNAs, which functions as a near-UV photosensor. Also catalyzes the transfer of sulfur to the sulfur carrier protein ThiS, forming ThiS-thiocarboxylate. This is a step in the synthesis of thiazole, in the thiamine biosynthesis pathway. The sulfur is donated as persulfide by IscS. The chain is tRNA sulfurtransferase from Shewanella baltica (strain OS155 / ATCC BAA-1091).